Here is an 801-residue protein sequence, read N- to C-terminus: Ferredoxin:CoB-CoM heterodisulfide reductase subunit A (801 aa).

149–172 (GGGIAGITAALNLADNGVSTVLVE) contributes to the FAD binding site. 2 consecutive 4Fe-4S ferredoxin-type domains span residues 239–269 (KKPR…FNCG) and 285–320 (PKIY…FSQK). Residues C248, C251, C254, C258, C295, C303, C306, and C310 each contribute to the [4Fe-4S] cluster site. The tract at residues 382–409 (FSKASSDPTPATCDSRCEDSSDESQGTD) is disordered. 2 consecutive 4Fe-4S ferredoxin-type domains span residues 606–634 (EIAT…VNES) and 635–664 (GRVV…IAGF). [4Fe-4S] cluster is bound by residues C615, C618, C621, C624, C644, C647, C650, and C654.

The protein belongs to the HdrA family. As to quaternary structure, the ferredoxin:CoB-CoM heterodisulfide reductase is composed of three subunits; HdrA1, HdrB1 and HdrC1. [4Fe-4S] cluster is required as a cofactor. FAD serves as cofactor.

It localises to the cytoplasm. It carries out the reaction coenzyme B + coenzyme M + 2 oxidized [2Fe-2S]-[ferredoxin] = coenzyme M-coenzyme B heterodisulfide + 2 reduced [2Fe-2S]-[ferredoxin] + 2 H(+). Its pathway is cofactor metabolism; coenzyme M-coenzyme B heterodisulfide reduction; coenzyme B and coenzyme M from coenzyme M-coenzyme B heterodisulfide: step 1/1. Its function is as follows. Part of a complex that catalyzes the reversible reduction of CoM-S-S-CoB to the thiol-coenzymes H-S-CoM (coenzyme M) and H-S-CoB (coenzyme B). Probably involved in methylotrophic methanogenesis but not in aceticlastic methanogenesis. The polypeptide is Ferredoxin:CoB-CoM heterodisulfide reductase subunit A (Methanosarcina acetivorans (strain ATCC 35395 / DSM 2834 / JCM 12185 / C2A)).